Reading from the N-terminus, the 87-residue chain is uncharacterized protein (87 aa).

Positions 4–87 (SKIIILNNNK…TISGSILIKI (84 aa)) constitute a 2Fe-2S ferredoxin-type domain. Residues C39, C44, C47, and C75 each contribute to the [2Fe-2S] cluster site.

Requires [2Fe-2S] cluster as cofactor.

This is an uncharacterized protein from Buchnera aphidicola subsp. Baizongia pistaciae (strain Bp).